Here is a 567-residue protein sequence, read N- to C-terminus: ATP-dependent RNA helicase HAS1 (567 aa).

The tract at residues 1-109 (MAKNVNSKAN…AQNDKFEDAG (109 aa)) is disordered. The span at 30-40 (EFSDSEDDEVD) shows a compositional bias: acidic residues. Residues 35–88 (EDDEVDQEKLVEELDEDFDEVANMLGADVTDPEEKKQSKLERKRKRDEEATAEY) are a coiled coil. A Q motif motif is present at residues 103 to 131 (DKFEDAGLSEPTMRAISDMGFKTMTKVQA). Residues 134 to 310 (IPPLLAGKDV…RISLRPGPLY (177 aa)) form the Helicase ATP-binding domain. 147-154 (AKTGSGKT) is a binding site for ATP. A DEAD box motif is present at residues 257 to 260 (DEAD). The region spanning 324–484 (GLEQGYVVCD…EYEFPTNKIV (161 aa)) is the Helicase C-terminal domain.

This sequence belongs to the DEAD box helicase family. DDX18/HAS1 subfamily. In terms of assembly, associates in the nucleolus with the 60S and pre-60S ribosomal subunits.

Its subcellular location is the nucleus. The protein resides in the nucleolus. It catalyses the reaction ATP + H2O = ADP + phosphate + H(+). Functionally, ATP-dependent RNA helicase involved in 40S ribosomal subunit biogenesis. Required for the processing and cleavage of 35S pre-rRNA at sites A0, A1, and A2, leading to mature 18S rRNA. The protein is ATP-dependent RNA helicase HAS1 (HAS1) of Scheffersomyces stipitis (strain ATCC 58785 / CBS 6054 / NBRC 10063 / NRRL Y-11545) (Yeast).